The sequence spans 112 residues: Putative pterin-4-alpha-carbinolamine dehydratase (112 aa).

This sequence belongs to the pterin-4-alpha-carbinolamine dehydratase family.

The enzyme catalyses (4aS,6R)-4a-hydroxy-L-erythro-5,6,7,8-tetrahydrobiopterin = (6R)-L-erythro-6,7-dihydrobiopterin + H2O. The polypeptide is Putative pterin-4-alpha-carbinolamine dehydratase (Shewanella sp. (strain MR-4)).